The following is a 302-amino-acid chain: Protoheme IX farnesyltransferase (302 aa).

9 helical membrane passes run 28–48 (LALL…SLDP), 50–70 (MLAL…AFNM), 93–115 (LNPY…SAAA), 119–138 (YVAL…YTQL), 147–167 (IIFG…AAAG), 172–192 (GGVL…WFLG), 219–239 (LIAV…LYYG), 242–262 (FLTA…IGGF), and 271–291 (ALKL…ILPL).

It belongs to the UbiA prenyltransferase family. Protoheme IX farnesyltransferase subfamily.

It localises to the cell membrane. It catalyses the reaction heme b + (2E,6E)-farnesyl diphosphate + H2O = Fe(II)-heme o + diphosphate. The protein operates within porphyrin-containing compound metabolism; heme O biosynthesis; heme O from protoheme: step 1/1. Its function is as follows. Converts heme B (protoheme IX) to heme O by substitution of the vinyl group on carbon 2 of heme B porphyrin ring with a hydroxyethyl farnesyl side group. The polypeptide is Protoheme IX farnesyltransferase (Aeropyrum pernix (strain ATCC 700893 / DSM 11879 / JCM 9820 / NBRC 100138 / K1)).